Consider the following 791-residue polypeptide: Endonuclease MutS2 (791 aa).

339 to 346 (GPNTGGKT) is a binding site for ATP. Positions 715–790 (LDLRGERYET…GSGVTIADLK (76 aa)) constitute a Smr domain.

Belongs to the DNA mismatch repair MutS family. MutS2 subfamily. In terms of assembly, homodimer. Binds to stalled ribosomes, contacting rRNA.

Endonuclease that is involved in the suppression of homologous recombination and thus may have a key role in the control of bacterial genetic diversity. In terms of biological role, acts as a ribosome collision sensor, splitting the ribosome into its 2 subunits. Detects stalled/collided 70S ribosomes which it binds and splits by an ATP-hydrolysis driven conformational change. Acts upstream of the ribosome quality control system (RQC), a ribosome-associated complex that mediates the extraction of incompletely synthesized nascent chains from stalled ribosomes and their subsequent degradation. Probably generates substrates for RQC. The sequence is that of Endonuclease MutS2 from Halothermothrix orenii (strain H 168 / OCM 544 / DSM 9562).